The chain runs to 273 residues: Large ribosomal subunit protein uL2 (273 aa).

The disordered stretch occupies residues 228 to 273; it reads VDHPHGGGEGKTSGGRHPVTPWGFPTKGKKTRKNKRTSKFIVKKRK. Positions 254-273 are enriched in basic residues; it reads KGKKTRKNKRTSKFIVKKRK.

This sequence belongs to the universal ribosomal protein uL2 family. As to quaternary structure, part of the 50S ribosomal subunit. Forms a bridge to the 30S subunit in the 70S ribosome.

Its function is as follows. One of the primary rRNA binding proteins. Required for association of the 30S and 50S subunits to form the 70S ribosome, for tRNA binding and peptide bond formation. It has been suggested to have peptidyltransferase activity; this is somewhat controversial. Makes several contacts with the 16S rRNA in the 70S ribosome. The sequence is that of Large ribosomal subunit protein uL2 from Rickettsia massiliae (strain Mtu5).